Consider the following 431-residue polypeptide: Gamma-glutamyl phosphate reductase (431 aa).

This sequence belongs to the gamma-glutamyl phosphate reductase family.

The protein localises to the cytoplasm. It catalyses the reaction L-glutamate 5-semialdehyde + phosphate + NADP(+) = L-glutamyl 5-phosphate + NADPH + H(+). The protein operates within amino-acid biosynthesis; L-proline biosynthesis; L-glutamate 5-semialdehyde from L-glutamate: step 2/2. Its function is as follows. Catalyzes the NADPH-dependent reduction of L-glutamate 5-phosphate into L-glutamate 5-semialdehyde and phosphate. The product spontaneously undergoes cyclization to form 1-pyrroline-5-carboxylate. The sequence is that of Gamma-glutamyl phosphate reductase from Trichodesmium erythraeum (strain IMS101).